A 455-amino-acid chain; its full sequence is tRNA-2-methylthio-N(6)-dimethylallyladenosine synthase (455 aa).

The region spanning 10 to 130 is the MTTase N-terminal domain; the sequence is RKVFIKTYGC…LPDALKRVRR (121 aa). [4Fe-4S] cluster contacts are provided by cysteine 19, cysteine 55, cysteine 93, cysteine 171, cysteine 175, and cysteine 178. The 233-residue stretch at 157-389 folds into the Radical SAM core domain; sequence RSRGVTAFLT…QALLLRQQKE (233 aa). The TRAM domain occupies 392–454; the sequence is ESLVGKTMDV…PNSLFAEVAG (63 aa).

The protein belongs to the methylthiotransferase family. MiaB subfamily. In terms of assembly, monomer. [4Fe-4S] cluster is required as a cofactor.

Its subcellular location is the cytoplasm. It carries out the reaction N(6)-dimethylallyladenosine(37) in tRNA + (sulfur carrier)-SH + AH2 + 2 S-adenosyl-L-methionine = 2-methylsulfanyl-N(6)-dimethylallyladenosine(37) in tRNA + (sulfur carrier)-H + 5'-deoxyadenosine + L-methionine + A + S-adenosyl-L-homocysteine + 2 H(+). In terms of biological role, catalyzes the methylthiolation of N6-(dimethylallyl)adenosine (i(6)A), leading to the formation of 2-methylthio-N6-(dimethylallyl)adenosine (ms(2)i(6)A) at position 37 in tRNAs that read codons beginning with uridine. This Agrobacterium fabrum (strain C58 / ATCC 33970) (Agrobacterium tumefaciens (strain C58)) protein is tRNA-2-methylthio-N(6)-dimethylallyladenosine synthase.